The following is a 210-amino-acid chain: Small ribosomal subunit protein uS5 (210 aa).

Residues 1–11 are compositionally biased toward polar residues; it reads MTQPNTQTTPN. The tract at residues 1–56 is disordered; it reads MTQPNTQTTPNDVPAAAEGQHQEQQQQQRRGGGRERRGGGRRGDRRGQERDSEWQE. The span at 18–29 shows a compositional bias: low complexity; the sequence is EGQHQEQQQQQR. The segment covering 32 to 56 has biased composition (basic and acidic residues); it reads GGRERRGGGRRGDRRGQERDSEWQE. Residues 54–117 enclose the S5 DRBM domain; that stretch reads WQERVVQIRR…ADGKKHLVKV (64 aa).

It belongs to the universal ribosomal protein uS5 family. In terms of assembly, part of the 30S ribosomal subunit. Contacts proteins S4 and S8.

Its function is as follows. With S4 and S12 plays an important role in translational accuracy. Located at the back of the 30S subunit body where it stabilizes the conformation of the head with respect to the body. In Prochlorococcus marinus (strain MIT 9303), this protein is Small ribosomal subunit protein uS5.